The primary structure comprises 268 residues: MSAALFSLDSPARGAPWPTEPAAFYEPGRVGKPGRGPEPGDLGEPGSTTPAMYDDESAIDFSAYIDSMAAVPTLELCHDEIFADLFNSNHKAAGAGSLELLQGGPTRPPGVGSIARGPLKREPDWGDGDAPGSLLPAQVAVCAQTVVSLAAAAQPTPPTSPEPPRGSPGPSLAPGPVREKGAGKRGPDRGSPEYRQRRERNNIAVRKSRDKAKRRNQEMQQKLVELSAENEKLHQRVEQLTRDLASLRQFFKELPSPPFLPPTGTDCR.

Disordered stretches follow at residues M1–P50, L98–G132, and A152–L223. N-acetylserine is present on S2. K120 participates in a covalent cross-link: Glycyl lysine isopeptide (Lys-Gly) (interchain with G-Cter in SUMO). Residues P155–A173 are compositionally biased toward pro residues. The span at V177 to N201 shows a compositional bias: basic and acidic residues. Positions S191–L254 constitute a bZIP domain. The segment at R195 to K222 is basic motif. The interval L226–L254 is leucine-zipper.

The protein belongs to the bZIP family. C/EBP subfamily. Binds DNA as a homodimer and as a heterodimer. Can form stable heterodimers with CEBPA, CEBPB and CEBPE. Directly interacts with SPI1/PU.1; this interaction does not affect DNA-binding properties of each partner. Interacts with PRDM16. As to expression, ubiquitously expressed.

It is found in the nucleus. Its function is as follows. Transcription activator that recognizes two different DNA motifs: the CCAAT homology common to many promoters and the enhanced core homology common to many enhancers. Important transcription factor regulating the expression of genes involved in immune and inflammatory responses. Transcriptional activator that enhances IL6 transcription alone and as heterodimer with CEBPB. The protein is CCAAT/enhancer-binding protein delta (Cebpd) of Rattus norvegicus (Rat).